A 155-amino-acid polypeptide reads, in one-letter code: Peptide deformylase 2 (155 aa).

Fe cation-binding residues include Cys90 and His132. Glu133 is an active-site residue. His136 serves as a coordination point for Fe cation.

This sequence belongs to the polypeptide deformylase family. It depends on Fe(2+) as a cofactor.

The catalysed reaction is N-terminal N-formyl-L-methionyl-[peptide] + H2O = N-terminal L-methionyl-[peptide] + formate. In terms of biological role, removes the formyl group from the N-terminal Met of newly synthesized proteins. Requires at least a dipeptide for an efficient rate of reaction. N-terminal L-methionine is a prerequisite for activity but the enzyme has broad specificity at other positions. In Clostridium perfringens (strain 13 / Type A), this protein is Peptide deformylase 2.